Consider the following 810-residue polypeptide: DNA-binding protein REB1 (810 aa).

Composition is skewed to basic and acidic residues over residues 1–10 (MPSGHNDKNA) and 29–44 (HQNHDPQLHTKDLENK). Disordered stretches follow at residues 1 to 80 (MPSG…ENIS), 114 to 161 (NQQD…GVDD), 180 to 243 (NNNN…TNND), 294 to 313 (HGLNHQNKNHNDDTDDLSNS), and 346 to 365 (QDTQPHQQKSPSHDNEAGSV). Composition is skewed to low complexity over residues 51-64 (IVESSSDVDVNNND) and 124-135 (NNNTDNGNDSNN). Basic and acidic residues predominate over residues 149 to 161 (DKNKKDAGVGVDD). Low complexity predominate over residues 180 to 191 (NNNNNNSIANDS). A compositionally biased stretch (basic and acidic residues) spans 198–208 (HDNGNNHENSQ). Over residues 346–355 (QDTQPHQQKS) the composition is skewed to polar residues. Phosphoserine is present on S355. The 54-residue stretch at 470–523 (HIFEQRGKWTAEEEQELAKLCAEKEGQWAEIGKTLGRMPEDCRDRWRNYVKCGT) folds into the HTH myb-type domain. Positions 497–519 (WAEIGKTLGRMPEDCRDRWRNYV) form a DNA-binding region, H-T-H motif. Residues 572 to 667 (QNDHRNNDED…STHSKSLSNT (96 aa)) form a disordered region. Over residues 586 to 606 (ASAAAAAAAAIQEQQQLLQQK) the composition is skewed to low complexity. The segment covering 627 to 636 (DNKDEDKPHD) has biased composition (basic and acidic residues). A compositionally biased stretch (polar residues) spans 643-667 (DDNSQNSMVPAPSATSTHSKSLSNT). Positions 692-717 (NWTIVSERMGGTRSRIQCRYKWNKLV) constitute a Myb-like domain. A Glycyl lysine isopeptide (Lys-Gly) (interchain with G-Cter in SUMO) cross-link involves residue K807.

Its subcellular location is the nucleus. In terms of biological role, DNA-binding protein that recognizes sites within both the enhancer and the promoter of rRNA transcription, as well as upstream of many genes transcribed by RNA polymerase II. It is essential for cell growth. May stimulate or inhibit transcription. Specifically recognizes the sequence 5'-CCGGGTA-3' or 5'-CGGGTRR-3' (where R is any purine). A member of the general regulatory factors (GRFs) which act as genome partitioners. Acts as a chromatin insulator which are known as STARs (Subtelomeric anti-silencing region). STARs prevent negative or positive transcription influence by extending across chromatin to a promoter. This chain is DNA-binding protein REB1 (REB1), found in Saccharomyces cerevisiae (strain ATCC 204508 / S288c) (Baker's yeast).